The following is a 259-amino-acid chain: Protein-L-isoaspartate O-methyltransferase 1 (259 aa).

S109 is a catalytic residue.

The protein belongs to the methyltransferase superfamily. L-isoaspartyl/D-aspartyl protein methyltransferase family.

Its subcellular location is the cytoplasm. The catalysed reaction is [protein]-L-isoaspartate + S-adenosyl-L-methionine = [protein]-L-isoaspartate alpha-methyl ester + S-adenosyl-L-homocysteine. In terms of biological role, catalyzes the methyl esterification of L-isoaspartyl residues in peptides and proteins that result from spontaneous decomposition of normal L-aspartyl and L-asparaginyl residues. It plays a role in the repair and/or degradation of damaged proteins. In Cupriavidus necator (strain ATCC 17699 / DSM 428 / KCTC 22496 / NCIMB 10442 / H16 / Stanier 337) (Ralstonia eutropha), this protein is Protein-L-isoaspartate O-methyltransferase 1.